The primary structure comprises 480 residues: Histone-lysine N-methyltransferase ASHR1 (480 aa).

Residues 11–248 (RCLGVSNLPQ…KDSEITISYI (238 aa)) enclose the SET domain. Positions 56, 59, 68, 71, 77, 81, 89, and 93 each coordinate Zn(2+). The MYND-type zinc finger occupies 56-93 (CDGCFKTNNLKKCSACQVVWYCGSSCQKSEWKLHRDEC).

It belongs to the class V-like SAM-binding methyltransferase superfamily. Histone-lysine methyltransferase family. SET2 subfamily.

It localises to the nucleus. The protein localises to the chromosome. The enzyme catalyses L-lysyl-[histone] + S-adenosyl-L-methionine = N(6)-methyl-L-lysyl-[histone] + S-adenosyl-L-homocysteine + H(+). Functionally, histone methyltransferase. This is Histone-lysine N-methyltransferase ASHR1 (ASHR1) from Arabidopsis thaliana (Mouse-ear cress).